The primary structure comprises 209 residues: Translation initiation factor IF-3 (209 aa).

It belongs to the IF-3 family. As to quaternary structure, monomer.

It is found in the cytoplasm. IF-3 binds to the 30S ribosomal subunit and shifts the equilibrium between 70S ribosomes and their 50S and 30S subunits in favor of the free subunits, thus enhancing the availability of 30S subunits on which protein synthesis initiation begins. In Chlorobium phaeobacteroides (strain DSM 266 / SMG 266 / 2430), this protein is Translation initiation factor IF-3.